The sequence spans 228 residues: MLRKAFLLNLGMLDYNRSRDLQKRLHARRVIDVVPDTVLLVEHPHTITLGRRGNRLCLKASPEDLERMGIPVVQVERGGDVTYHGPGQAVVYPILHLRESGLSLADYVSALESLVIGVLGDFGIKGRRNGKNRGVWVGGDKIASVGIAVSRWVSYHGIALNCTTNLEYFGLIDACGLKGVEMTSISRLLGKDVSGSEVHRSIAFHLRRLFERDWQERTLPEIEALLND.

Residues 32–214 form the BPL/LPL catalytic domain; sequence DVVPDTVLLV…HLRRLFERDW (183 aa). Substrate is bound by residues 77 to 84, 144 to 146, and 157 to 159; these read RGGDVTYH, SVG, and GIA. C175 functions as the Acyl-thioester intermediate in the catalytic mechanism.

It belongs to the LipB family.

The protein localises to the cytoplasm. The enzyme catalyses octanoyl-[ACP] + L-lysyl-[protein] = N(6)-octanoyl-L-lysyl-[protein] + holo-[ACP] + H(+). It functions in the pathway protein modification; protein lipoylation via endogenous pathway; protein N(6)-(lipoyl)lysine from octanoyl-[acyl-carrier-protein]: step 1/2. In terms of biological role, catalyzes the transfer of endogenously produced octanoic acid from octanoyl-acyl-carrier-protein onto the lipoyl domains of lipoate-dependent enzymes. Lipoyl-ACP can also act as a substrate although octanoyl-ACP is likely to be the physiological substrate. The sequence is that of Octanoyltransferase from Syntrophobacter fumaroxidans (strain DSM 10017 / MPOB).